Consider the following 410-residue polypeptide: Protein translocase subunit SecY (410 aa).

The next 9 helical transmembrane spans lie at 61–81 (LSVF…IQIL), 106–126 (ITKY…VLRL), 135–155 (LYFI…VMWL), 170–190 (VIIF…QLFV), 195–215 (FLDF…IVFV), 248–268 (QGGV…DYVI), 289–309 (ILFL…YCSL), 349–369 (LFGS…EFVF), and 373–393 (VFKG…IDLI).

The protein belongs to the SecY/SEC61-alpha family. In terms of assembly, component of the plastid Sec protein translocase complex, which is composed of at least SecY and SecE.

The protein localises to the plastid. Its subcellular location is the chloroplast thylakoid membrane. In terms of biological role, the central subunit of the protein translocation channel SecYE. Consists of two halves formed by TMs 1-5 and 6-10. These two domains form a lateral gate at the front which open onto the bilayer between TMs 2 and 7, and are clamped together by SecE at the back. The channel is closed by both a pore ring composed of hydrophobic SecY resides and a short helix (helix 2A) on the extracellular side of the membrane which forms a plug. The protein is Protein translocase subunit SecY of Cyanidium caldarium (Red alga).